A 657-amino-acid chain; its full sequence is Regulator of MON1-CCZ1 complex (657 aa).

Residues 471 to 637 (KKEMPHKFVI…NFTPGEHCEE (167 aa)) enclose the Mic1 domain.

This sequence belongs to the RMC1 family. Found in a complex with RMC1, CCZ1 MON1A and MON1B.

It is found in the lysosome membrane. The protein localises to the late endosome membrane. Functionally, component of the CCZ1-MON1 RAB7A guanine exchange factor (GEF). Acts as a positive regulator of CCZ1-MON1A/B function necessary for endosomal/autophagic flux and efficient RAB7A localization. The polypeptide is Regulator of MON1-CCZ1 complex (Homo sapiens (Human)).